A 313-amino-acid polypeptide reads, in one-letter code: MTARRPTRFAKGELNVYRAPRDVTDVTRALRSTGRRVVLVPTMGALHEGHLTLIRAAKRVQGAVVVVSIFVNPLQFGAGEDLDAYPRTLDDDLAALRAEGVEIAFTPTVGDMYPDGTRTSVHPGPLGDDLEGASRPGHFAGVLTVVCKLLHIVRPDRAFFGEKDYQQLVLIRQMVTDLNIDTKIVGVPTVREADGLALSSRNRYLDEVEREQAGALSAALLAGMYAASNGAAATLDAARAVLDEVPAIEVDYLQVRDPMLGPVPHEGAARLLVAARLGQTRLLDNIAVDIGASDGIDGHPRVGSPDHQLPWRN.

An ATP-binding site is contributed by 43–50 (MGALHEGH). His-50 functions as the Proton donor in the catalytic mechanism. Gln-75 provides a ligand contact to (R)-pantoate. Residue Gln-75 participates in beta-alanine binding. 161–164 (GEKD) contributes to the ATP binding site. Position 167 (Gln-167) interacts with (R)-pantoate. Residues Val-190 and 198–201 (LSSR) each bind ATP.

Belongs to the pantothenate synthetase family. Homodimer.

The protein localises to the cytoplasm. It carries out the reaction (R)-pantoate + beta-alanine + ATP = (R)-pantothenate + AMP + diphosphate + H(+). The protein operates within cofactor biosynthesis; (R)-pantothenate biosynthesis; (R)-pantothenate from (R)-pantoate and beta-alanine: step 1/1. Catalyzes the condensation of pantoate with beta-alanine in an ATP-dependent reaction via a pantoyl-adenylate intermediate. This chain is Pantothenate synthetase, found in Mycobacterium sp. (strain KMS).